Here is a 276-residue protein sequence, read N- to C-terminus: UDP-3-O-acyl-N-acetylglucosamine deacetylase (276 aa).

Positions 76, 234, and 238 each coordinate Zn(2+). Residue H261 is the Proton donor of the active site.

It belongs to the LpxC family. It depends on Zn(2+) as a cofactor.

It catalyses the reaction a UDP-3-O-[(3R)-3-hydroxyacyl]-N-acetyl-alpha-D-glucosamine + H2O = a UDP-3-O-[(3R)-3-hydroxyacyl]-alpha-D-glucosamine + acetate. It functions in the pathway glycolipid biosynthesis; lipid IV(A) biosynthesis; lipid IV(A) from (3R)-3-hydroxytetradecanoyl-[acyl-carrier-protein] and UDP-N-acetyl-alpha-D-glucosamine: step 2/6. Functionally, catalyzes the hydrolysis of UDP-3-O-myristoyl-N-acetylglucosamine to form UDP-3-O-myristoylglucosamine and acetate, the committed step in lipid A biosynthesis. The chain is UDP-3-O-acyl-N-acetylglucosamine deacetylase from Synechocystis sp. (strain ATCC 27184 / PCC 6803 / Kazusa).